The sequence spans 122 residues: Large ribosomal subunit protein uL14c (122 aa).

Belongs to the universal ribosomal protein uL14 family. In terms of assembly, part of the 50S ribosomal subunit.

The protein localises to the plastid. It is found in the chloroplast. Its function is as follows. Binds to 23S rRNA. In Phaseolus vulgaris (Kidney bean), this protein is Large ribosomal subunit protein uL14c.